We begin with the raw amino-acid sequence, 174 residues long: Probable N-acetyltransferase Rv2775 (174 aa).

Residues 6 to 172 (IRIRAAKPID…VGYRLYRSAP (167 aa)) enclose the N-acetyltransferase domain.

This sequence belongs to the acetyltransferase family.

This chain is Probable N-acetyltransferase Rv2775, found in Mycobacterium tuberculosis (strain ATCC 25618 / H37Rv).